The following is a 242-amino-acid chain: Probable 2-phosphosulfolactate phosphatase (242 aa).

Belongs to the ComB family. Mg(2+) is required as a cofactor.

It catalyses the reaction (2R)-O-phospho-3-sulfolactate + H2O = (2R)-3-sulfolactate + phosphate. This chain is Probable 2-phosphosulfolactate phosphatase, found in Caldicellulosiruptor saccharolyticus (strain ATCC 43494 / DSM 8903 / Tp8T 6331).